The chain runs to 608 residues: Glutamine--fructose-6-phosphate aminotransferase [isomerizing] (608 aa).

C2 acts as the Nucleophile; for GATase activity in catalysis. Positions 2–217 (CGIVGIVGNQ…DGDWAVIGKT (216 aa)) constitute a Glutamine amidotransferase type-2 domain. SIS domains are found at residues 281 to 422 (ISDA…ARGT) and 456 to 598 (LSRE…VDQP). The active-site For Fru-6P isomerization activity is K603.

Homodimer.

It localises to the cytoplasm. It carries out the reaction D-fructose 6-phosphate + L-glutamine = D-glucosamine 6-phosphate + L-glutamate. Catalyzes the first step in hexosamine metabolism, converting fructose-6P into glucosamine-6P using glutamine as a nitrogen source. The polypeptide is Glutamine--fructose-6-phosphate aminotransferase [isomerizing] (Rhizobium meliloti (strain 1021) (Ensifer meliloti)).